We begin with the raw amino-acid sequence, 377 residues long: EPS I polysaccharide export outer membrane protein EpsA (377 aa).

An N-terminal signal peptide occupies residues 1–23; it reads MFVSIPSIRKTVMSLCAVPLMAA. Residue C24 is the site of N-palmitoyl cysteine attachment. C24 carries the S-diacylglycerol cysteine lipid modification.

Belongs to the BexD/CtrA/VexA family.

The protein localises to the cell outer membrane. In terms of biological role, probably involved in polymerization and/or export of exopolysaccharide EPS I which functions as a virulence factor. This Ralstonia solanacearum (Pseudomonas solanacearum) protein is EPS I polysaccharide export outer membrane protein EpsA (epsA).